We begin with the raw amino-acid sequence, 315 residues long: Ribonuclease HII (315 aa).

The RNase H type-2 domain maps to 78–267; the sequence is TLVAGVDEAG…VREALGLAPL (190 aa). Asp-84, Glu-85, and Asp-176 together coordinate a divalent metal cation. The segment at 273–292 is disordered; that stretch reads APPPESAAEPGGEGAIAGIA. The segment covering 278–292 has biased composition (low complexity); that stretch reads SAAEPGGEGAIAGIA.

This sequence belongs to the RNase HII family. Mn(2+) is required as a cofactor. Requires Mg(2+) as cofactor.

The protein resides in the cytoplasm. The catalysed reaction is Endonucleolytic cleavage to 5'-phosphomonoester.. Functionally, endonuclease that specifically degrades the RNA of RNA-DNA hybrids. The chain is Ribonuclease HII from Anaeromyxobacter sp. (strain Fw109-5).